A 68-amino-acid polypeptide reads, in one-letter code: Agnoprotein (68 aa).

The Cytoplasmic portion of the chain corresponds to 1–24 (MVLRQLSRQASVKVGKTWTGTKRR). A phosphoserine; by host mark is found at serine 7 and serine 11. The residue at position 21 (threonine 21) is a Phosphothreonine; by host. The chain crosses the membrane as a helical; Signal-anchor for type II membrane protein span at residues 25-41 (AQRIFIFILELLLDFCR). At 42–68 (GEDSVDGKKKKDSLTDKTETVTEKKES) the chain is on the extracellular side. The tract at residues 44-68 (DSVDGKKKKDSLTDKTETVTEKKES) is disordered.

It belongs to the polyomavirus agnoprotein family. As to quaternary structure, homooligomer. Interacts with VP1. Interacts with large T antigen; this interaction may impact upon the activity of T-antigen on the control of viral gene transcription and replication. Interacts with small t antigen. Interacts with host CBX5; this interaction induces the dissociation of CBX5 from LBR, resulting in destabilization of the nuclear envelope. Post-translationally, phosphorylated by host PKC. Phosphorylation alters the stability and may also have an impact on the subcellular location.

Its subcellular location is the host cytoplasm. It is found in the host nucleus membrane. The protein resides in the host rough endoplasmic reticulum membrane. The protein localises to the host cell membrane. Functionally, alters the structure of the nuclear envelope by interacting with host CBX5 and disrupting CBX5 association with LBR. Involved in the perinuclear-nuclear localization of the capsid protein VP1 during virion assembly and maturation. Plays an important role in the release of progeny virions from infected cells and in viral propagation, probably by acting as a viral ionic channel in the host plasma membrane. Allows influx of extracellular calcium ions in the host cell. May contribute to viral genome transcription and translation of viral late proteins. The polypeptide is Agnoprotein (Simian virus 12 (strain wt100) (SV-12)).